We begin with the raw amino-acid sequence, 521 residues long: Probable glycogen synthase (521 aa).

It belongs to the glycosyltransferase 1 family. Bacterial/plant glycogen synthase subfamily.

The enzyme catalyses [(1-&gt;4)-alpha-D-glucosyl](n) + ADP-alpha-D-glucose = [(1-&gt;4)-alpha-D-glucosyl](n+1) + ADP + H(+). Its pathway is glycan biosynthesis; glycogen biosynthesis. In terms of biological role, synthesizes alpha-1,4-glucan chains using ADP-glucose. The chain is Probable glycogen synthase (glgA) from Methanocaldococcus jannaschii (strain ATCC 43067 / DSM 2661 / JAL-1 / JCM 10045 / NBRC 100440) (Methanococcus jannaschii).